We begin with the raw amino-acid sequence, 325 residues long: Elongation factor P--(R)-beta-lysine ligase (325 aa).

76-78 (SPE) is a substrate binding site. Residues 100–102 (RNE) and Asn109 each bind ATP. Residue Tyr118 coordinates substrate. Residue 244-245 (EL) participates in ATP binding. Glu251 provides a ligand contact to substrate. Gly300 contacts ATP.

This sequence belongs to the class-II aminoacyl-tRNA synthetase family. EpmA subfamily. Homodimer.

The catalysed reaction is D-beta-lysine + L-lysyl-[protein] + ATP = N(6)-((3R)-3,6-diaminohexanoyl)-L-lysyl-[protein] + AMP + diphosphate + H(+). Functionally, with EpmB is involved in the beta-lysylation step of the post-translational modification of translation elongation factor P (EF-P). Catalyzes the ATP-dependent activation of (R)-beta-lysine produced by EpmB, forming a lysyl-adenylate, from which the beta-lysyl moiety is then transferred to the epsilon-amino group of a conserved specific lysine residue in EF-P. This chain is Elongation factor P--(R)-beta-lysine ligase, found in Photorhabdus laumondii subsp. laumondii (strain DSM 15139 / CIP 105565 / TT01) (Photorhabdus luminescens subsp. laumondii).